Reading from the N-terminus, the 395-residue chain is Phosphopentomutase (395 aa).

The Mn(2+) site is built by Asp10, Asp294, His299, Asp335, His336, and His347.

This sequence belongs to the phosphopentomutase family. Mn(2+) is required as a cofactor.

It is found in the cytoplasm. It catalyses the reaction 2-deoxy-alpha-D-ribose 1-phosphate = 2-deoxy-D-ribose 5-phosphate. The catalysed reaction is alpha-D-ribose 1-phosphate = D-ribose 5-phosphate. The protein operates within carbohydrate degradation; 2-deoxy-D-ribose 1-phosphate degradation; D-glyceraldehyde 3-phosphate and acetaldehyde from 2-deoxy-alpha-D-ribose 1-phosphate: step 1/2. In terms of biological role, isomerase that catalyzes the conversion of deoxy-ribose 1-phosphate (dRib-1-P) and ribose 1-phosphate (Rib-1-P) to deoxy-ribose 5-phosphate (dRib-5-P) and ribose 5-phosphate (Rib-5-P), respectively. The polypeptide is Phosphopentomutase (Actinobacillus succinogenes (strain ATCC 55618 / DSM 22257 / CCUG 43843 / 130Z)).